Consider the following 31-residue polypeptide: Diuretic hormone class 2 (31 aa).

The residue at position 31 (Pro31) is a Proline amide.

It belongs to the diuretic hormone class 2 family.

Its subcellular location is the secreted. In terms of biological role, regulation of fluid secretion. Stimulates primary urine secretion by Malpighian tubules and causes a dose-dependent stimulation of cAMP levels in the tubules. Has a nonselective effect on Na(+)/K(+) ion transport. In vitro, primarily elevates intracellular Ca(2+). This is Diuretic hormone class 2 from Apis mellifera (Honeybee).